We begin with the raw amino-acid sequence, 312 residues long: Protoheme IX farnesyltransferase (312 aa).

9 consecutive transmembrane segments (helical) span residues 29-49, 50-70, 90-110, 117-137, 150-170, 177-197, 223-243, 248-268, and 292-312; these read VMSL…GHMN, PVLA…SGAL, IPAG…LSAF, LMVN…YAVV, IVIG…AATG, VVLF…LSLF, ALFY…LGFA, GAIS…MWVA, and LFAV…FGGF.

The protein belongs to the UbiA prenyltransferase family. Protoheme IX farnesyltransferase subfamily.

Its subcellular location is the cell inner membrane. It carries out the reaction heme b + (2E,6E)-farnesyl diphosphate + H2O = Fe(II)-heme o + diphosphate. The protein operates within porphyrin-containing compound metabolism; heme O biosynthesis; heme O from protoheme: step 1/1. Functionally, converts heme B (protoheme IX) to heme O by substitution of the vinyl group on carbon 2 of heme B porphyrin ring with a hydroxyethyl farnesyl side group. The polypeptide is Protoheme IX farnesyltransferase (Brucella anthropi (strain ATCC 49188 / DSM 6882 / CCUG 24695 / JCM 21032 / LMG 3331 / NBRC 15819 / NCTC 12168 / Alc 37) (Ochrobactrum anthropi)).